Consider the following 304-residue polypeptide: Uricase (304 aa).

An N-acetylalanine modification is found at alanine 2. N6-acetyllysine; alternate is present on residues lysine 10 and lysine 23. N6-succinyllysine; alternate is present on residues lysine 10 and lysine 23. Lysine 23 acts as the Charge relay system in catalysis. N6-acetyllysine is present on residues lysine 27 and lysine 36. Phosphoserine occurs at positions 39 and 63. The Charge relay system role is filled by threonine 68. Urate is bound by residues threonine 68 and aspartate 69. Lysine 118, lysine 122, and lysine 164 each carry N6-acetyllysine. Phenylalanine 170 contacts urate. 2 positions are modified to N6-acetyllysine: lysine 175 and lysine 185. Arginine 187 contacts urate. N6-acetyllysine; alternate occurs at positions 221 and 228. Residues lysine 221 and lysine 228 each carry the N6-succinyllysine; alternate modification. Residue serine 232 is modified to Phosphoserine. Urate is bound by residues valine 235, glutamine 236, and asparagine 262. Histidine 264 functions as the Charge relay system in the catalytic mechanism. Position 278 is an N6-acetyllysine (lysine 278). At tyrosine 289 the chain carries Phosphotyrosine. A Microbody targeting signal motif is present at residues 302–304; that stretch reads SRL.

It belongs to the uricase family. Homotetramer.

It localises to the peroxisome. It catalyses the reaction urate + O2 + H2O = 5-hydroxyisourate + H2O2. Its pathway is purine metabolism; urate degradation; (S)-allantoin from urate: step 1/3. Its function is as follows. Catalyzes the oxidation of uric acid to 5-hydroxyisourate, which is further processed to form (S)-allantoin. The protein is Uricase (UOX) of Sus scrofa (Pig).